Here is a 175-residue protein sequence, read N- to C-terminus: Regenerating islet-derived protein 3-alpha (175 aa).

Positions 1 to 26 (MLPHLVLNSISWMLLSCLLFVFQVQG) are cleaved as a signal peptide. Residues 27–37 (EDFQKEVPSPR) constitute a propeptide that is removed on maturation. Intrachain disulfides connect cysteine 40–cysteine 51, cysteine 68–cysteine 171, and cysteine 146–cysteine 163. The C-type lectin domain maps to 47-172 (YRSHCYALVM…CDGTLPFVCK (126 aa)). Zn(2+) contacts are provided by histidine 50, histidine 107, glutamate 121, and histidine 145. The interval 103–118 (WIGLHDPTMGQQPNGG) is sufficient to activate EXTL3.

Forms a hexameric membrane-permeabilizing oligomeric pore on membrane phospholipids. The hexamer is formed by three dimers related by helical symmetry. Forms filaments, filamentation traps pore complexes and limits damage to host cells. Interacts with EXTL3. Post-translationally, proteolytic processing by trypsin removes an inhibitory N-terminal propeptide and is essential for peptidoglycan binding and antibacterial activity. As to expression, small intestine and pancreas.

It localises to the secreted. Bactericidal C-type lectin. The lack of the EPN motif may explain its inability to bind peptidoglycan. In terms of biological role, acts as a hormone in response to different stimuli like anti-inflammatory signals, such as IL17A, or gut microbiome. Secreted by different cell types to activate its receptor EXTL3 and induce cell specific signaling pathways. Induced by IL17A in keratinocytes, regulates keratinocyte proliferation and differentiation after skin injury via activation of EXTL3-PI3K-AKT signaling pathway. In parallel, inhibits skin inflammation through the inhibition of inflammatory cytokines such as IL6 and TNF. In pancreas, is able to permealize beta-cells membrane and stimulate their proliferation. In Mus musculus (Mouse), this protein is Regenerating islet-derived protein 3-alpha (Reg3a).